The chain runs to 434 residues: Enolase (434 aa).

Glutamine 163 serves as a coordination point for (2R)-2-phosphoglycerate. Glutamate 205 acts as the Proton donor in catalysis. The Mg(2+) site is built by aspartate 242, glutamate 289, and aspartate 316. (2R)-2-phosphoglycerate contacts are provided by lysine 341, arginine 370, serine 371, and lysine 392. The Proton acceptor role is filled by lysine 341.

The protein belongs to the enolase family. The cofactor is Mg(2+).

It is found in the cytoplasm. The protein resides in the secreted. Its subcellular location is the cell surface. It carries out the reaction (2R)-2-phosphoglycerate = phosphoenolpyruvate + H2O. Its pathway is carbohydrate degradation; glycolysis; pyruvate from D-glyceraldehyde 3-phosphate: step 4/5. Its function is as follows. Catalyzes the reversible conversion of 2-phosphoglycerate (2-PG) into phosphoenolpyruvate (PEP). It is essential for the degradation of carbohydrates via glycolysis. The polypeptide is Enolase (Lacticaseibacillus casei (strain BL23) (Lactobacillus casei)).